We begin with the raw amino-acid sequence, 226 residues long: EEF1A lysine methyltransferase 3 (226 aa).

Residues Trp-57, Gly-83–Gly-85, Asp-104, Trp-133, and Ala-150 each bind S-adenosyl-L-methionine.

This sequence belongs to the methyltransferase superfamily. METTL21 family. As to quaternary structure, interacts with members of the heat shock protein 70 and 90 families and of the TCP-1 chaperonin family, as well as with HSPD1, STIP1 and tubulin; at least some of these proteins may be methylation substrates.

The protein localises to the cytoplasm. Its subcellular location is the cytoskeleton. It localises to the microtubule organizing center. The protein resides in the centrosome. The catalysed reaction is L-lysyl-[protein] + 3 S-adenosyl-L-methionine = N(6),N(6),N(6)-trimethyl-L-lysyl-[protein] + 3 S-adenosyl-L-homocysteine + 3 H(+). It catalyses the reaction L-lysyl-[protein] + S-adenosyl-L-methionine = N(6)-methyl-L-lysyl-[protein] + S-adenosyl-L-homocysteine + H(+). It carries out the reaction N(6)-methyl-L-lysyl-[protein] + S-adenosyl-L-methionine = N(6),N(6)-dimethyl-L-lysyl-[protein] + S-adenosyl-L-homocysteine + H(+). The enzyme catalyses N(6),N(6)-dimethyl-L-lysyl-[protein] + S-adenosyl-L-methionine = N(6),N(6),N(6)-trimethyl-L-lysyl-[protein] + S-adenosyl-L-homocysteine + H(+). Its function is as follows. Protein-lysine methyltransferase that selectively mono-, di- and trimethylates 'Lys-165' of the translation elongation factors EEF1A1 and EEF1A2 in an aminoacyl-tRNA and GTP-dependent manner. EEF1A1 methylation by EEF1AKMT3 is dynamic as well as inducible by stress conditions, such as ER-stress, and plays a regulatory role on mRNA translation. This chain is EEF1A lysine methyltransferase 3, found in Bos taurus (Bovine).